Reading from the N-terminus, the 593-residue chain is UvrABC system protein C (593 aa).

Positions 17 to 94 constitute a GIY-YIG domain; the sequence is MEPGCYLMKD…IKQYQPRYNI (78 aa). One can recognise a UVR domain in the interval 199–234; sequence KTILKSLEERMLTASESLDFERAKEYRDLIQHIQNL.

Belongs to the UvrC family. In terms of assembly, interacts with UvrB in an incision complex.

The protein resides in the cytoplasm. In terms of biological role, the UvrABC repair system catalyzes the recognition and processing of DNA lesions. UvrC both incises the 5' and 3' sides of the lesion. The N-terminal half is responsible for the 3' incision and the C-terminal half is responsible for the 5' incision. This chain is UvrABC system protein C, found in Staphylococcus aureus (strain MSSA476).